The primary structure comprises 269 residues: Phosphonoacetaldehyde hydrolase (269 aa).

Aspartate 9 acts as the Nucleophile in catalysis. The Mg(2+) site is built by aspartate 9 and alanine 11. Lysine 50 functions as the Schiff-base intermediate with substrate in the catalytic mechanism. Aspartate 184 contributes to the Mg(2+) binding site.

This sequence belongs to the HAD-like hydrolase superfamily. PhnX family. In terms of assembly, homodimer. Mg(2+) serves as cofactor.

It catalyses the reaction phosphonoacetaldehyde + H2O = acetaldehyde + phosphate + H(+). Its function is as follows. Involved in phosphonate degradation. The sequence is that of Phosphonoacetaldehyde hydrolase from Lysinibacillus sphaericus (strain C3-41).